The following is a 123-amino-acid chain: Non-specific lipid-transfer protein 3 (123 aa).

A signal peptide spans 1-25 (MASSGQLLKLVCLVAVMCCMAVGGP). Cystine bridges form between C33–C80, C43–C57, C58–C105, and C78–C119.

It belongs to the plant LTP family.

Its function is as follows. Plant non-specific lipid-transfer proteins transfer phospholipids as well as galactolipids across membranes. May play a role in wax or cutin deposition in the cell walls of expanding epidermal cells and certain secretory tissues. This chain is Non-specific lipid-transfer protein 3, found in Prunus dulcis (Almond).